A 244-amino-acid chain; its full sequence is Phosphonates import ATP-binding protein PhnC 2 (244 aa).

In terms of domain architecture, ABC transporter spans 3–242; that stretch reads LRVEGLKKVY…ELTDYTVDQL (240 aa). 36–43 provides a ligand contact to ATP; it reads GPSGAGKS.

Belongs to the ABC transporter superfamily. Phosphonates importer (TC 3.A.1.9.1) family. As to quaternary structure, the complex is composed of two ATP-binding proteins (PhnC), two transmembrane proteins (PhnE) and a solute-binding protein (PhnD).

It localises to the cell membrane. The catalysed reaction is phosphonate(out) + ATP + H2O = phosphonate(in) + ADP + phosphate + H(+). Functionally, part of the ABC transporter complex PhnCDE involved in phosphonates import. Responsible for energy coupling to the transport system. This is Phosphonates import ATP-binding protein PhnC 2 from Halalkalibacterium halodurans (strain ATCC BAA-125 / DSM 18197 / FERM 7344 / JCM 9153 / C-125) (Bacillus halodurans).